Reading from the N-terminus, the 224-residue chain is UPF0758 protein VP0184 (224 aa).

Residues 102-224 (ALTSPEQTKL…SVSFAERGWI (123 aa)) form the MPN domain. Residues H173, H175, and D186 each coordinate Zn(2+). Positions 173 to 186 (HNHPSGVAEPSQAD) match the JAMM motif motif.

It belongs to the UPF0758 family.

The sequence is that of UPF0758 protein VP0184 from Vibrio parahaemolyticus serotype O3:K6 (strain RIMD 2210633).